Consider the following 369-residue polypeptide: Flagellar P-ring protein (369 aa).

A signal peptide spans 1–23 (MRIASFFTVLLTLLTLNITPASA).

The protein belongs to the FlgI family. As to quaternary structure, the basal body constitutes a major portion of the flagellar organelle and consists of four rings (L,P,S, and M) mounted on a central rod.

It is found in the periplasm. The protein localises to the bacterial flagellum basal body. Its function is as follows. Assembles around the rod to form the L-ring and probably protects the motor/basal body from shearing forces during rotation. In Pectobacterium atrosepticum (strain SCRI 1043 / ATCC BAA-672) (Erwinia carotovora subsp. atroseptica), this protein is Flagellar P-ring protein.